Reading from the N-terminus, the 466-residue chain is ATP synthase subunit beta (466 aa).

Residue 155–162 (GGAGVGKT) coordinates ATP.

Belongs to the ATPase alpha/beta chains family. In terms of assembly, F-type ATPases have 2 components, CF(1) - the catalytic core - and CF(0) - the membrane proton channel. CF(1) has five subunits: alpha(3), beta(3), gamma(1), delta(1), epsilon(1). CF(0) has three main subunits: a(1), b(2) and c(9-12). The alpha and beta chains form an alternating ring which encloses part of the gamma chain. CF(1) is attached to CF(0) by a central stalk formed by the gamma and epsilon chains, while a peripheral stalk is formed by the delta and b chains.

The protein localises to the cell inner membrane. The catalysed reaction is ATP + H2O + 4 H(+)(in) = ADP + phosphate + 5 H(+)(out). In terms of biological role, produces ATP from ADP in the presence of a proton gradient across the membrane. The catalytic sites are hosted primarily by the beta subunits. This chain is ATP synthase subunit beta, found in Azoarcus sp. (strain BH72).